The primary structure comprises 372 residues: 1,3,6,8-tetrahydroxynaphthalene synthase (372 aa).

Residue C138 is part of the active site.

The protein belongs to the thiolase-like superfamily. Chalcone/stilbene synthases family. As to quaternary structure, homodimer.

It catalyses the reaction 5 malonyl-CoA + 5 H(+) = naphthalene-1,3,6,8-tetrol + 5 CO2 + 5 CoA + H2O. It functions in the pathway pigment biosynthesis; melanin biosynthesis. Its function is as follows. Involved in the biosynthesis of melanin but also various secondary metabolites containing a naphthoquinone ring. Catalyzes the iterative condensation of five CoA-linked malonyl units to form a pentaketide intermediate. THNS subsequently catalyzes the dual intramolecular Claisen and aldol condensations of this linear intermediate to produce the fused ring of 1,3,6,8-tetrahydroxynaphthalene (THN). This chain is 1,3,6,8-tetrahydroxynaphthalene synthase, found in Streptomyces griseus.